A 200-amino-acid polypeptide reads, in one-letter code: Methylthioribulose-1-phosphate dehydratase-like protein (200 aa).

This sequence belongs to the aldolase class II family. MtnB subfamily.

The protein is Methylthioribulose-1-phosphate dehydratase-like protein of Schizosaccharomyces pombe (strain 972 / ATCC 24843) (Fission yeast).